The sequence spans 310 residues: Ribonuclease Z (310 aa).

Residues histidine 61, histidine 63, aspartate 65, histidine 66, and histidine 139 each contribute to the Zn(2+) site. The active-site Proton acceptor is aspartate 65. A disordered region spans residues 150-175; sequence EDDRPGRFDRPKAEELGVPVGPKFGR. Residues 153–164 are compositionally biased toward basic and acidic residues; sequence RPGRFDRPKAEE. Residues aspartate 210 and histidine 268 each contribute to the Zn(2+) site.

Belongs to the RNase Z family. In terms of assembly, homodimer. Zn(2+) serves as cofactor.

The enzyme catalyses Endonucleolytic cleavage of RNA, removing extra 3' nucleotides from tRNA precursor, generating 3' termini of tRNAs. A 3'-hydroxy group is left at the tRNA terminus and a 5'-phosphoryl group is left at the trailer molecule.. Functionally, zinc phosphodiesterase, which displays some tRNA 3'-processing endonuclease activity. Probably involved in tRNA maturation, by removing a 3'-trailer from precursor tRNA. This chain is Ribonuclease Z, found in Halorubrum lacusprofundi (strain ATCC 49239 / DSM 5036 / JCM 8891 / ACAM 34).